The following is a 199-amino-acid chain: Peptidyl-tRNA hydrolase (199 aa).

Tyr18 contributes to the tRNA binding site. His23 functions as the Proton acceptor in the catalytic mechanism. 3 residues coordinate tRNA: Tyr69, Asn71, and Asn117.

Belongs to the PTH family. As to quaternary structure, monomer.

The protein resides in the cytoplasm. The enzyme catalyses an N-acyl-L-alpha-aminoacyl-tRNA + H2O = an N-acyl-L-amino acid + a tRNA + H(+). Functionally, hydrolyzes ribosome-free peptidyl-tRNAs (with 1 or more amino acids incorporated), which drop off the ribosome during protein synthesis, or as a result of ribosome stalling. Its function is as follows. Catalyzes the release of premature peptidyl moieties from peptidyl-tRNA molecules trapped in stalled 50S ribosomal subunits, and thus maintains levels of free tRNAs and 50S ribosomes. The polypeptide is Peptidyl-tRNA hydrolase (Prochlorococcus marinus (strain MIT 9515)).